Here is a 681-residue protein sequence, read N- to C-terminus: DNA-directed RNA polymerase subunit beta' (681 aa).

4 residues coordinate Zn(2+): cysteine 69, cysteine 71, cysteine 87, and cysteine 90. Residues aspartate 489, aspartate 491, and aspartate 493 each coordinate Mg(2+).

This sequence belongs to the RNA polymerase beta' chain family. RpoC1 subfamily. In plastids the minimal PEP RNA polymerase catalytic core is composed of four subunits: alpha, beta, beta', and beta''. When a (nuclear-encoded) sigma factor is associated with the core the holoenzyme is formed, which can initiate transcription. Mg(2+) is required as a cofactor. Requires Zn(2+) as cofactor.

The protein localises to the plastid. The protein resides in the chloroplast. The enzyme catalyses RNA(n) + a ribonucleoside 5'-triphosphate = RNA(n+1) + diphosphate. In terms of biological role, DNA-dependent RNA polymerase catalyzes the transcription of DNA into RNA using the four ribonucleoside triphosphates as substrates. In Solanum bulbocastanum (Wild potato), this protein is DNA-directed RNA polymerase subunit beta'.